The sequence spans 156 residues: Small ribosomal subunit protein uS7 (156 aa).

It belongs to the universal ribosomal protein uS7 family. As to quaternary structure, part of the 30S ribosomal subunit. Contacts proteins S9 and S11.

Functionally, one of the primary rRNA binding proteins, it binds directly to 16S rRNA where it nucleates assembly of the head domain of the 30S subunit. Is located at the subunit interface close to the decoding center, probably blocks exit of the E-site tRNA. This chain is Small ribosomal subunit protein uS7, found in Roseobacter denitrificans (strain ATCC 33942 / OCh 114) (Erythrobacter sp. (strain OCh 114)).